The following is a 320-amino-acid chain: Uroplakin-3b (320 aa).

The signal sequence occupies residues 1–29; that stretch reads MGLPWGQPHLGLQMLLLALNCLRPSLSLG. At 30 to 240 the chain is on the lumenal side; sequence EWGSWMDASS…LHPLFSGRPP (211 aa). An N-linked (GlcNAc...) asparagine glycan is attached at Asn133. The chain crosses the membrane as a helical span at residues 241-266; sequence TLGLLGSLYHALLQPVVAGGGPGAAA. The Cytoplasmic portion of the chain corresponds to 267–320; that stretch reads DRLLHGQALHDPPHPTQRGRHTAGGLQAWPGPPPQPQPLAWPLCMGLGEMGRWE. The tract at residues 273–303 is disordered; it reads QALHDPPHPTQRGRHTAGGLQAWPGPPPQPQ.

This sequence belongs to the uroplakin-3 family. In terms of assembly, heterodimer with uroplakin-1B (UPK1B).

It is found in the cell membrane. In terms of biological role, component of the asymmetric unit membrane (AUM); a highly specialized biomembrane elaborated by terminally differentiated urothelial cells. May play an important role in AUM-cytoskeleton interaction in terminally differentiated urothelial cells. It also contributes to the formation of urothelial glycocalyx which may play an important role in preventing bacterial adherence. This Homo sapiens (Human) protein is Uroplakin-3b (UPK3B).